Consider the following 1044-residue polypeptide: Pre-mRNA-splicing factor ATP-dependent RNA helicase DEAH1 (1044 aa).

The segment at 106 to 206 is disordered; that stretch reads EVVVEKKSSV…TLSKKEKEEA (101 aa). The segment covering 108–121 has biased composition (basic and acidic residues); that stretch reads VVEKKSSVSESRKS. Residues 122–132 show a composition bias toward basic residues; sequence DKGKKRFRKKS. A phosphoserine mark is found at Ser-135 and Ser-138. Residues 157–166 show a composition bias toward acidic residues; it reads EEDDGSESEE. A compositionally biased stretch (basic and acidic residues) spans 167–206; the sequence is ERVRDQKEREELEQHLKDRDTARTRKLTEQTLSKKEKEEA. The Helicase ATP-binding domain maps to 414–577; sequence LKAVEEHQVL…FDTAPIFSFP (164 aa). 427–434 contributes to the ATP binding site; that stretch reads GDTGSGKT. A DEAH box motif is present at residues 524–527; sequence DEAH. Positions 600 to 775 constitute a Helicase C-terminal domain; sequence IVTILTIHVR…SVVLALKSLG (176 aa).

This sequence belongs to the DEAD box helicase family. DEAH subfamily. PRP2 sub-subfamily. Widely expressed.

The catalysed reaction is ATP + H2O = ADP + phosphate + H(+). Its function is as follows. Involved in pre-mRNA splicing. This chain is Pre-mRNA-splicing factor ATP-dependent RNA helicase DEAH1, found in Arabidopsis thaliana (Mouse-ear cress).